A 144-amino-acid chain; its full sequence is Putative pre-16S rRNA nuclease (144 aa).

The protein belongs to the YqgF nuclease family.

It localises to the cytoplasm. Functionally, could be a nuclease involved in processing of the 5'-end of pre-16S rRNA. The chain is Putative pre-16S rRNA nuclease from Acaryochloris marina (strain MBIC 11017).